Consider the following 339-residue polypeptide: Phenylalanine--tRNA ligase alpha subunit (339 aa).

E254 serves as a coordination point for Mg(2+).

It belongs to the class-II aminoacyl-tRNA synthetase family. Phe-tRNA synthetase alpha subunit type 1 subfamily. In terms of assembly, tetramer of two alpha and two beta subunits. Mg(2+) serves as cofactor.

The protein localises to the cytoplasm. It catalyses the reaction tRNA(Phe) + L-phenylalanine + ATP = L-phenylalanyl-tRNA(Phe) + AMP + diphosphate + H(+). The sequence is that of Phenylalanine--tRNA ligase alpha subunit from Caldanaerobacter subterraneus subsp. tengcongensis (strain DSM 15242 / JCM 11007 / NBRC 100824 / MB4) (Thermoanaerobacter tengcongensis).